Reading from the N-terminus, the 301-residue chain is Acidic endochitinase (301 aa).

The first 25 residues, 1–25, serve as a signal peptide directing secretion; sequence MARTPQSTPLLISLSVLALLQTSYA. Residues 26 to 301 enclose the GH18 domain; the sequence is GGIAIYWGQN…GYSSSIKSSV (276 aa). Intrachain disulfides connect Cys45/Cys92 and Cys75/Cys82. Glu152 functions as the Proton donor in the catalytic mechanism. A disulfide bridge connects residues Cys187 and Cys216.

The protein belongs to the glycosyl hydrolase 18 family. Chitinase class II subfamily.

It catalyses the reaction Random endo-hydrolysis of N-acetyl-beta-D-glucosaminide (1-&gt;4)-beta-linkages in chitin and chitodextrins.. Functionally, defense against chitin containing fungal pathogens. In Vitis vinifera (Grape), this protein is Acidic endochitinase (CHIT3).